The chain runs to 415 residues: DNA polymerase IV (415 aa).

A UmuC domain is found at 15 to 196 (ILHVDMNCFF…LPVGAMHGIG (182 aa)). Mg(2+)-binding residues include Asp-19 and Asp-115. Residue Glu-116 is part of the active site. Residues 238-260 (KGMDDRQVDPSQMGQHKSVGNSM) form a disordered region. Over residues 246–260 (DPSQMGQHKSVGNSM) the composition is skewed to polar residues.

This sequence belongs to the DNA polymerase type-Y family. In terms of assembly, monomer. Mg(2+) is required as a cofactor.

The protein localises to the cytoplasm. The catalysed reaction is DNA(n) + a 2'-deoxyribonucleoside 5'-triphosphate = DNA(n+1) + diphosphate. Poorly processive, error-prone DNA polymerase involved in untargeted mutagenesis. Copies undamaged DNA at stalled replication forks, which arise in vivo from mismatched or misaligned primer ends. These misaligned primers can be extended by PolIV. Exhibits no 3'-5' exonuclease (proofreading) activity. May be involved in translesional synthesis, in conjunction with the beta clamp from PolIII. The protein is DNA polymerase IV of Bacillus cereus (strain ZK / E33L).